Reading from the N-terminus, the 176-residue chain is 2-C-methyl-D-erythritol 2,4-cyclodiphosphate synthase (176 aa).

3 residues coordinate a divalent metal cation: Asp23, His25, and His60. 23–25 (DSH) provides a ligand contact to 4-CDP-2-C-methyl-D-erythritol 2-phosphate. 149 to 152 (TSGE) provides a ligand contact to 4-CDP-2-C-methyl-D-erythritol 2-phosphate.

This sequence belongs to the IspF family. As to quaternary structure, homotrimer. A divalent metal cation serves as cofactor.

The catalysed reaction is 4-CDP-2-C-methyl-D-erythritol 2-phosphate = 2-C-methyl-D-erythritol 2,4-cyclic diphosphate + CMP. The protein operates within isoprenoid biosynthesis; isopentenyl diphosphate biosynthesis via DXP pathway; isopentenyl diphosphate from 1-deoxy-D-xylulose 5-phosphate: step 4/6. Its function is as follows. Involved in the biosynthesis of isopentenyl diphosphate (IPP) and dimethylallyl diphosphate (DMAPP), two major building blocks of isoprenoid compounds. Catalyzes the conversion of 4-diphosphocytidyl-2-C-methyl-D-erythritol 2-phosphate (CDP-ME2P) to 2-C-methyl-D-erythritol 2,4-cyclodiphosphate (ME-CPP) with a corresponding release of cytidine 5-monophosphate (CMP). This Chlamydia abortus (strain DSM 27085 / S26/3) (Chlamydophila abortus) protein is 2-C-methyl-D-erythritol 2,4-cyclodiphosphate synthase.